Here is a 635-residue protein sequence, read N- to C-terminus: MKFKLIIFIIIIYIIKILKSEILNEFGYGLVDENLKCLSFIGDSNNQQLCNNKLINKQLIYSTINKSNQIQSLKMVEQSFKQLTFLQGKCLNLNFAQFGICDIYFPSCVETSFGISLPKRLCKSVCKQIVTDCPTLGVSLNCSDSNKFPTIGTLYNLTKYGYTENNGFYQVECSNPTNYYYNEINSTNNQFIEICPSPLVLRNQSDSKYGEDKGYTYLSPTNCVLGCPQPFFKNNKWVQMYKMSIVLSTLSFICSIYNIITFGLLSKLKSKYNLCITFFSVSTVLMSLMDIVTYGIGYEELLCPESGRYAIQSDVACGVTGAFFHIGITTGVLWWTTMSICLYSEVKRFKMISFRYIIIFNSVISLILLIIPLSGQAFMSGNGSLGCWIRKTWYANGTFWIPCGISLFIGAICIVLVIYEIFKISRNLSKDNKPLMFQIRPFLCVLLVGGSFLYLFIFYFNNERNLDKYKAAIPSYVQCLLSSDENGEDCLTDGPGFGAYFTFYFFTRLFGITSFSIYGTSKIARDIWFESAYNHPFFNPYIVKCLSLLGISKHFSSNSISGSNQKRFNRNGSNFNMKQNKSNPNDSISLSVVESTKKQDTENELESNIETKENRSTDISIENTTSSKDSNTNSF.

A signal peptide spans 1–20; it reads MKFKLIIFIIIIYIIKILKS. Topologically, residues 21–244 are extracellular; that stretch reads EILNEFGYGL…NKWVQMYKMS (224 aa). Positions 32-166 constitute an FZ domain; the sequence is DENLKCLSFI…LTKYGYTENN (135 aa). 2 disulfides stabilise this stretch: cysteine 37-cysteine 108 and cysteine 50-cysteine 101. Residues asparagine 65, asparagine 141, asparagine 156, asparagine 185, and asparagine 203 are each glycosylated (N-linked (GlcNAc...) asparagine). Residues 245 to 265 form a helical membrane-spanning segment; it reads IVLSTLSFICSIYNIITFGLL. Residues 266–275 lie on the Cytoplasmic side of the membrane; the sequence is SKLKSKYNLC. Residues 276-296 form a helical membrane-spanning segment; sequence ITFFSVSTVLMSLMDIVTYGI. The Extracellular portion of the chain corresponds to 297–314; it reads GYEELLCPESGRYAIQSD. A helical transmembrane segment spans residues 315–335; that stretch reads VACGVTGAFFHIGITTGVLWW. Residues 336 to 356 lie on the Cytoplasmic side of the membrane; the sequence is TTMSICLYSEVKRFKMISFRY. Residues 357 to 377 traverse the membrane as a helical segment; the sequence is IIIFNSVISLILLIIPLSGQA. At 378–398 the chain is on the extracellular side; sequence FMSGNGSLGCWIRKTWYANGT. Residues asparagine 382 and asparagine 396 are each glycosylated (N-linked (GlcNAc...) asparagine). The helical transmembrane segment at 399–419 threads the bilayer; it reads FWIPCGISLFIGAICIVLVIY. Residues 420–440 lie on the Cytoplasmic side of the membrane; that stretch reads EIFKISRNLSKDNKPLMFQIR. The helical transmembrane segment at 441–461 threads the bilayer; that stretch reads PFLCVLLVGGSFLYLFIFYFN. The Extracellular portion of the chain corresponds to 462–496; that stretch reads NERNLDKYKAAIPSYVQCLLSSDENGEDCLTDGPG. Residues 497–517 traverse the membrane as a helical segment; sequence FGAYFTFYFFTRLFGITSFSI. At 518 to 635 the chain is on the cytoplasmic side; the sequence is YGTSKIARDI…SSKDSNTNSF (118 aa). Positions 559 to 594 are enriched in polar residues; the sequence is SISGSNQKRFNRNGSNFNMKQNKSNPNDSISLSVVE. The interval 559–635 is disordered; that stretch reads SISGSNQKRF…SSKDSNTNSF (77 aa). A coiled-coil region spans residues 594-623; it reads ESTKKQDTENELESNIETKENRSTDISIEN. Positions 623 to 635 are enriched in low complexity; it reads NTTSSKDSNTNSF.

Belongs to the G-protein coupled receptor Fz/Smo family.

Its subcellular location is the membrane. The polypeptide is Frizzled and smoothened-like protein C (fslC) (Dictyostelium discoideum (Social amoeba)).